Here is a 469-residue protein sequence, read N- to C-terminus: Neuraminidase (469 aa).

Residues 1–9 (MNPNQKIIT) are Intravirion-facing. Residues 10–30 (IGSVSLTIATICFLMQIAILV) traverse the membrane as a helical segment. Residues 11–33 (GSVSLTIATICFLMQIAILVTTV) form an involved in apical transport and lipid raft association region. The Virion surface portion of the chain corresponds to 31–469 (TTVTLHFKQY…DGADINLMPI (439 aa)). The hypervariable stalk region stretch occupies residues 36–88 (HFKQYECDSPANNQVMPCEPISIERNITEIVYLTNTTIEKEICPKLVEYRNWS). Residues N61, N70, and N86 are each glycosylated (N-linked (GlcNAc...) asparagine; by host). Residues 91 to 469 (QCKITGFAPF…DGADINLMPI (379 aa)) are head of neuraminidase. 8 disulfides stabilise this stretch: C92/C417, C124/C129, C183/C230, C232/C237, C278/C291, C280/C289, C318/C337, and C421/C447. Substrate is bound at residue R118. An N-linked (GlcNAc...) asparagine; by host glycan is attached at N146. Residue D151 is the Proton donor/acceptor of the active site. R152 is a binding site for substrate. N-linked (GlcNAc...) asparagine; by host glycosylation is found at N200 and N234. 276–277 (EE) is a substrate binding site. R292 serves as a coordination point for substrate. Residues D293, G297, and D324 each coordinate Ca(2+). Position 371 (R371) interacts with substrate. The N-linked (GlcNAc...) asparagine; by host glycan is linked to N402. Y406 functions as the Nucleophile in the catalytic mechanism.

The protein belongs to the glycosyl hydrolase 34 family. Homotetramer. Ca(2+) is required as a cofactor. N-glycosylated.

The protein localises to the virion membrane. Its subcellular location is the host apical cell membrane. It carries out the reaction Hydrolysis of alpha-(2-&gt;3)-, alpha-(2-&gt;6)-, alpha-(2-&gt;8)- glycosidic linkages of terminal sialic acid residues in oligosaccharides, glycoproteins, glycolipids, colominic acid and synthetic substrates.. With respect to regulation, inhibited by the neuraminidase inhibitors zanamivir (Relenza) and oseltamivir (Tamiflu). These drugs interfere with the release of progeny virus from infected cells and are effective against all influenza strains. Resistance to neuraminidase inhibitors is quite rare. Catalyzes the removal of terminal sialic acid residues from viral and cellular glycoconjugates. Cleaves off the terminal sialic acids on the glycosylated HA during virus budding to facilitate virus release. Additionally helps virus spread through the circulation by further removing sialic acids from the cell surface. These cleavages prevent self-aggregation and ensure the efficient spread of the progeny virus from cell to cell. Otherwise, infection would be limited to one round of replication. Described as a receptor-destroying enzyme because it cleaves a terminal sialic acid from the cellular receptors. May facilitate viral invasion of the upper airways by cleaving the sialic acid moieties on the mucin of the airway epithelial cells. Likely to plays a role in the budding process through its association with lipid rafts during intracellular transport. May additionally display a raft-association independent effect on budding. Plays a role in the determination of host range restriction on replication and virulence. Sialidase activity in late endosome/lysosome traffic seems to enhance virus replication. This Aves (whales) protein is Neuraminidase.